The following is a 275-amino-acid chain: Gibberellin-regulated protein 14 (275 aa).

The signal sequence occupies residues 1 to 21 (MALSLLSVFIFFHVFTNVVFA). Positions 34-207 (PTPTLPSPSP…TAPPVKPPTP (174 aa)) are disordered. The span at 36–207 (PTLPSPSPAT…TAPPVKPPTP (172 aa)) shows a compositional bias: pro residues.

Belongs to the GASA family. In terms of processing, six disulfide bonds may be present. In terms of tissue distribution, expressed in flower abscission zone, style, stamen filaments and lateral roots.

The protein resides in the secreted. In terms of biological role, gibberellin-regulated protein that may function in hormonal controlled steps of development such as seed germination, flowering and seed maturation. In Arabidopsis thaliana (Mouse-ear cress), this protein is Gibberellin-regulated protein 14 (GASA14).